The chain runs to 479 residues: Probable glycine dehydrogenase (decarboxylating) subunit 2 (479 aa).

K265 carries the post-translational modification N6-(pyridoxal phosphate)lysine.

It belongs to the GcvP family. C-terminal subunit subfamily. As to quaternary structure, the glycine cleavage system is composed of four proteins: P, T, L and H. In this organism, the P 'protein' is a heterodimer of two subunits. Pyridoxal 5'-phosphate is required as a cofactor.

The catalysed reaction is N(6)-[(R)-lipoyl]-L-lysyl-[glycine-cleavage complex H protein] + glycine + H(+) = N(6)-[(R)-S(8)-aminomethyldihydrolipoyl]-L-lysyl-[glycine-cleavage complex H protein] + CO2. Functionally, the glycine cleavage system catalyzes the degradation of glycine. The P protein binds the alpha-amino group of glycine through its pyridoxal phosphate cofactor; CO(2) is released and the remaining methylamine moiety is then transferred to the lipoamide cofactor of the H protein. The protein is Probable glycine dehydrogenase (decarboxylating) subunit 2 of Pseudothermotoga lettingae (strain ATCC BAA-301 / DSM 14385 / NBRC 107922 / TMO) (Thermotoga lettingae).